A 259-amino-acid polypeptide reads, in one-letter code: Global transcriptional regulator CodY (259 aa).

Residues 1–155 are GAF domain; it reads MNLLEKTRKI…GATVVGMEIL (155 aa). The segment at residues 203–222 is a DNA-binding region (H-T-H motif); that stretch reads ASKIADRVGITRSVIVNALR. Ser-215 is subject to Phosphoserine.

Belongs to the CodY family.

The protein resides in the cytoplasm. Its function is as follows. DNA-binding global transcriptional regulator which is involved in the adaptive response to starvation and acts by directly or indirectly controlling the expression of numerous genes in response to nutrient availability. During rapid exponential growth, CodY is highly active and represses genes whose products allow adaptation to nutrient depletion. In Anoxybacillus flavithermus (strain DSM 21510 / WK1), this protein is Global transcriptional regulator CodY.